The primary structure comprises 397 residues: Tryptophan synthase beta chain (397 aa).

The residue at position 91 (Lys-91) is an N6-(pyridoxal phosphate)lysine.

The protein belongs to the TrpB family. Tetramer of two alpha and two beta chains. It depends on pyridoxal 5'-phosphate as a cofactor.

It catalyses the reaction (1S,2R)-1-C-(indol-3-yl)glycerol 3-phosphate + L-serine = D-glyceraldehyde 3-phosphate + L-tryptophan + H2O. Its pathway is amino-acid biosynthesis; L-tryptophan biosynthesis; L-tryptophan from chorismate: step 5/5. Its function is as follows. The beta subunit is responsible for the synthesis of L-tryptophan from indole and L-serine. This Bacillus cereus (strain ATCC 14579 / DSM 31 / CCUG 7414 / JCM 2152 / NBRC 15305 / NCIMB 9373 / NCTC 2599 / NRRL B-3711) protein is Tryptophan synthase beta chain.